Consider the following 228-residue polypeptide: Leucine rich adaptor protein 1-like (228 aa).

At Met1 the chain carries N-acetylmethionine. Residues 1–89 (MEDSPLPDLR…GSPRGSHSSA (89 aa)) are disordered. 2 stretches are compositionally biased toward basic and acidic residues: residues 8 to 21 (DLRD…RKVP) and 28 to 42 (LRGE…DRDP). A compositionally biased stretch (gly residues) spans 44 to 56 (GGSGGGGGGGGGC). Residues 57–88 (SSSSSYCSFPPSLSSSSSSSPTSGSPRGSHSS) show a composition bias toward low complexity.

The chain is Leucine rich adaptor protein 1-like (LURAP1L) from Homo sapiens (Human).